The primary structure comprises 402 residues: BTB and MATH domain-containing protein 40 (402 aa).

Residues Met-1–Arg-25 form a disordered region. The span at Ser-15–Arg-25 shows a compositional bias: low complexity. One can recognise an MATH domain in the interval Val-43 to Ile-177. One can recognise a BTB domain in the interval Thr-222–Ile-295.

Interacts with cul-3.

It functions in the pathway protein modification; protein ubiquitination. Its function is as follows. Probable substrate-specific adapter of an E3 ubiquitin-protein ligase complex which mediates the ubiquitination and subsequent proteasomal degradation of target proteins. The protein is BTB and MATH domain-containing protein 40 (bath-40) of Caenorhabditis elegans.